Reading from the N-terminus, the 82-residue chain is uncharacterized protein (82 aa).

This is an uncharacterized protein from Archaeoglobus fulgidus (strain ATCC 49558 / DSM 4304 / JCM 9628 / NBRC 100126 / VC-16).